Reading from the N-terminus, the 238-residue chain is MNKNVMVKGLTALTILTILTSLGFAENISNQPHSIAKAEKNVKEITDATKEPYNSVVAFVGGTGVVVGKNTIVTNKHIAKSNDIFKNRVSAHHSSKGKGGGNYDVKDIVEYPGKEDLAIVHVHETSTEGLNFNKNVSYTKFADGAKVKDRISVIGYPKGAQTKYKMFESTGTINHISGTFMEFDAYAQPGNSGSPVLNSKHELIGILYAGSGKDESEKNFGVYFTPQLKEFIQNNIEK.

The N-terminal stretch at 1–38 (MNKNVMVKGLTALTILTILTSLGFAENISNQPHSIAKA) is a signal peptide. Residues histidine 77, aspartate 116, and serine 192 each act as charge relay system in the active site.

Belongs to the peptidase S1B family.

The protein localises to the secreted. The polypeptide is Serine protease SplA (splA) (Staphylococcus aureus (strain COL)).